Consider the following 150-residue polypeptide: 3-hydroxyacyl-[acyl-carrier-protein] dehydratase FabZ (150 aa).

H47 is a catalytic residue.

Belongs to the thioester dehydratase family. FabZ subfamily.

It is found in the cytoplasm. It catalyses the reaction a (3R)-hydroxyacyl-[ACP] = a (2E)-enoyl-[ACP] + H2O. Involved in unsaturated fatty acids biosynthesis. Catalyzes the dehydration of short chain beta-hydroxyacyl-ACPs and long chain saturated and unsaturated beta-hydroxyacyl-ACPs. The polypeptide is 3-hydroxyacyl-[acyl-carrier-protein] dehydratase FabZ (Verminephrobacter eiseniae (strain EF01-2)).